A 1115-amino-acid polypeptide reads, in one-letter code: Neural cell adhesion molecule 1 (1115 aa).

The N-terminal stretch at 1–19 (MLRTKDLIWTLFFLGTAVS) is a signal peptide. Ig-like C2-type domains follow at residues 20 to 111 (LQVD…ATVN), 116 to 205 (QKLM…KDIQ), 212 to 302 (PTVQ…ASIH), 309 to 402 (PKIT…MYLE), and 407 to 492 (PKLQ…ESLE). At 20 to 711 (LQVDIVPSQG…NGSPTAGLST (692 aa)) the chain is on the extracellular side. 2 disulfide bridges follow: Cys-41-Cys-96 and Cys-139-Cys-189. Residues 152–156 (KHKGR) and 161–165 (KKDVR) contribute to the heparin site. Residue Asn-222 is glycosylated (N-linked (GlcNAc...) asparagine; partial). A disulfide bridge links Cys-235 with Cys-288. Residues Asn-316, Asn-348, Asn-424, Asn-450, and Asn-479 are each glycosylated (N-linked (GlcNAc...) asparagine). Cys-330 and Cys-386 are joined by a disulfide. Cys-427 and Cys-480 are disulfide-bonded. Fibronectin type-III domains lie at 500 to 599 (TPSS…TQPV) and 601 to 696 (EPSA…SAQP). Thr-706 carries the GPI-anchor amidated serine lipid modification. Residues 712–729 (GAIVGILIVIFVLLLVVM) traverse the membrane as a helical segment. Topologically, residues 730 to 1115 (DITCYFLNKC…TQTKENESKA (386 aa)) are cytoplasmic. 3 disordered regions span residues 756-809 (GAKG…TEPE), 839-912 (FATA…SASN), and 924-1115 (VLSP…ESKA). Over residues 758-799 (KGKDMEEGKAAFSKDESKEPIVEVRTEEERTPNHDGGKHTEP) the composition is skewed to basic and acidic residues. A phosphoserine mark is found at Ser-770 and Ser-774. Composition is skewed to low complexity over residues 800 to 809 (NETTPLTEPE), 845 to 856 (SPTSETTTLTSS), and 876 to 896 (TPSK…KVAP). A phosphoserine mark is found at Ser-887 and Ser-890. 2 stretches are compositionally biased toward polar residues: residues 902–912 (DTPTSAPSASN) and 926–935 (SPSTPASAGE). At Ser-926 the chain carries Phosphoserine. Thr-929 carries the post-translational modification Phosphothreonine. Low complexity-rich tracts occupy residues 936–974 (TSKA…PQAK) and 999–1012 (AATA…KAAT). Residues Ser-946 and Ser-958 each carry the phosphoserine modification. Position 1001 is a phosphothreonine (Thr-1001). Phosphoserine is present on Ser-1005. Basic and acidic residues-rich tracts occupy residues 1019 to 1037 (EDLK…DLAK) and 1074 to 1091 (KTEK…ESEA). Thr-1030 is subject to Phosphothreonine.

Interacts with MDK. Found in a complex with SLC39A6, SLC39A10 and with NCAM1; this complex controls NCAM1 phosphorylation and integration into focal adhesion complexes during epithelial-tomesenchymal transition. Interacts with synaptic plasticity regulator PANTS. Post-translationally, polysialylated by ST8SIA2 and ST8SIA4. Polysialylation modulates cell interactions by confering both attractive and repulsive properties that are highly regulated by ST8SIA2 and ST8SIA4. Polysialylation is formed on a-2,3-linked sialic acid of core glycans.

It localises to the cell membrane. Its function is as follows. This protein is a cell adhesion molecule involved in neuron-neuron adhesion, neurite fasciculation, outgrowth of neurites, etc. The protein is Neural cell adhesion molecule 1 of Mus musculus (Mouse).